The following is a 316-amino-acid chain: Serine protease 45 (316 aa).

The signal sequence occupies residues 1–38; sequence MAASLSRLSAGLAASRPLGLSRSFLLLVLLLLNSGYKG. The Peptidase S1 domain occupies 49–290; sequence WWPKNLDLSR…YSRWIKKQIS (242 aa). C74 and C90 are oxidised to a cystine. The active-site Charge relay system is H89. N110 carries an N-linked (GlcNAc...) asparagine glycan. The Charge relay system role is filled by D137. 2 N-linked (GlcNAc...) asparagine glycosylation sites follow: N162 and N186. 3 disulfide bridges follow: C171–C248, C206–C229, and C238–C266. S242 (charge relay system) is an active-site residue.

It belongs to the peptidase S1 family.

It localises to the secreted. This Bos taurus (Bovine) protein is Serine protease 45 (PRSS45).